The sequence spans 76 residues: Exodeoxyribonuclease 7 small subunit (76 aa).

Belongs to the XseB family. Heterooligomer composed of large and small subunits.

The protein resides in the cytoplasm. The catalysed reaction is Exonucleolytic cleavage in either 5'- to 3'- or 3'- to 5'-direction to yield nucleoside 5'-phosphates.. In terms of biological role, bidirectionally degrades single-stranded DNA into large acid-insoluble oligonucleotides, which are then degraded further into small acid-soluble oligonucleotides. The protein is Exodeoxyribonuclease 7 small subunit of Geobacter sulfurreducens (strain ATCC 51573 / DSM 12127 / PCA).